Consider the following 483-residue polypeptide: Probable glycine dehydrogenase (decarboxylating) subunit 2 (483 aa).

Residues 1 to 33 (MLIFEHSRKNRRNYSQAPATRPAKNNIPDHLKR) form a disordered region. An N6-(pyridoxal phosphate)lysine modification is found at K264.

Belongs to the GcvP family. C-terminal subunit subfamily. As to quaternary structure, the glycine cleavage system is composed of four proteins: P, T, L and H. In this organism, the P 'protein' is a heterodimer of two subunits. Pyridoxal 5'-phosphate serves as cofactor.

The enzyme catalyses N(6)-[(R)-lipoyl]-L-lysyl-[glycine-cleavage complex H protein] + glycine + H(+) = N(6)-[(R)-S(8)-aminomethyldihydrolipoyl]-L-lysyl-[glycine-cleavage complex H protein] + CO2. The glycine cleavage system catalyzes the degradation of glycine. The P protein binds the alpha-amino group of glycine through its pyridoxal phosphate cofactor; CO(2) is released and the remaining methylamine moiety is then transferred to the lipoamide cofactor of the H protein. This chain is Probable glycine dehydrogenase (decarboxylating) subunit 2, found in Nitrosomonas europaea (strain ATCC 19718 / CIP 103999 / KCTC 2705 / NBRC 14298).